The primary structure comprises 167 residues: Ribosome maturation factor RimM (167 aa).

In terms of domain architecture, PRC barrel spans 92–166; sequence DDEFYHADLI…RIVADPPEEQ (75 aa).

The protein belongs to the RimM family. In terms of assembly, binds ribosomal protein uS19.

It is found in the cytoplasm. In terms of biological role, an accessory protein needed during the final step in the assembly of 30S ribosomal subunit, possibly for assembly of the head region. Essential for efficient processing of 16S rRNA. May be needed both before and after RbfA during the maturation of 16S rRNA. It has affinity for free ribosomal 30S subunits but not for 70S ribosomes. The protein is Ribosome maturation factor RimM of Paracoccus denitrificans (strain Pd 1222).